Consider the following 52-residue polypeptide: AKNYPTVSGSDHLRQVFXMGLSDQALLSDPVFRPLVEKXFFDDYAXRSGFEG.

The sequence is that of Unknown protein from spot 415 of 2D-PAGE of etiolated coleoptile from Zea mays (Maize).